Consider the following 1025-residue polypeptide: Probable beta-galactosidase B (1025 aa).

Positions 1–21 are cleaved as a signal peptide; the sequence is MATAFWLLLFLLGSLHVLTAA. N23 carries an N-linked (GlcNAc...) asparagine glycan. Y90 serves as a coordination point for substrate. N100 carries N-linked (GlcNAc...) asparagine glycosylation. Substrate contacts are provided by N135, A136, E137, and N195. The active-site Proton donor is the E196. The N-linked (GlcNAc...) asparagine glycan is linked to N211. Y265 contributes to the substrate binding site. The cysteines at positions 271 and 324 are disulfide-linked. Catalysis depends on E308, which acts as the Nucleophile. Y373 contacts substrate. 7 N-linked (GlcNAc...) asparagine glycosylation sites follow: N411, N456, N736, N776, N884, N925, and N926.

It belongs to the glycosyl hydrolase 35 family.

It is found in the secreted. It carries out the reaction Hydrolysis of terminal non-reducing beta-D-galactose residues in beta-D-galactosides.. Its function is as follows. Cleaves beta-linked terminal galactosyl residues from gangliosides, glycoproteins, and glycosaminoglycans. This chain is Probable beta-galactosidase B (lacB), found in Emericella nidulans (strain FGSC A4 / ATCC 38163 / CBS 112.46 / NRRL 194 / M139) (Aspergillus nidulans).